A 120-amino-acid polypeptide reads, in one-letter code: Small ribosomal subunit protein bS16 (120 aa).

The disordered stretch occupies residues 84-120; it reads KRESRNNPQQGQPKKKAQERAAAAAAAAEKAASEAAA. Residues 103 to 120 are compositionally biased toward low complexity; the sequence is RAAAAAAAAEKAASEAAA.

Belongs to the bacterial ribosomal protein bS16 family.

The polypeptide is Small ribosomal subunit protein bS16 (Beijerinckia indica subsp. indica (strain ATCC 9039 / DSM 1715 / NCIMB 8712)).